The chain runs to 420 residues: Innexin-3 (420 aa).

The next 4 membrane-spanning stretches (helical) occupy residues 33–53 (ATLL…GSAI), 104–124 (WVPI…WIWS), 193–213 (MLYI…FIIL), and 278–298 (IYLF…INTL). The segment at 378-405 (NRDFHHGHSTKSTSPGLEEGHHEHLYTP) is disordered. A compositionally biased stretch (basic and acidic residues) spans 395-405 (EEGHHEHLYTP).

It belongs to the pannexin family. Interacts with F-actin. In terms of tissue distribution, evenly distributed along the adjoining membranes of the two pm5 pharyngeal muscle cells.

The protein resides in the cell membrane. The protein localises to the cell junction. Its subcellular location is the gap junction. Structural component of gap junctions. Plays a role in maintaining gap junction activity to promote phayngeal muscle contraction. This chain is Innexin-3, found in Caenorhabditis elegans.